Here is a 137-residue protein sequence, read N- to C-terminus: 5-hydroxyisourate hydrolase (137 aa).

The first 23 residues, 1-23 (MLKRYLVLSVVTAAFSLPSLVYA), serve as a signal peptide directing secretion. Residues H32, R70, and Y134 each contribute to the substrate site.

This sequence belongs to the transthyretin family. 5-hydroxyisourate hydrolase subfamily. In terms of assembly, homotetramer.

It is found in the periplasm. The enzyme catalyses 5-hydroxyisourate + H2O = 5-hydroxy-2-oxo-4-ureido-2,5-dihydro-1H-imidazole-5-carboxylate + H(+). In terms of biological role, catalyzes the hydrolysis of 5-hydroxyisourate (HIU) to 2-oxo-4-hydroxy-4-carboxy-5-ureidoimidazoline (OHCU). The protein is 5-hydroxyisourate hydrolase (hiuH) of Escherichia coli O157:H7.